We begin with the raw amino-acid sequence, 226 residues long: Triosephosphate isomerase (226 aa).

Position 13-15 (13-15 (NFK)) interacts with substrate. The active-site Electrophile is histidine 97. Glutamate 145 (proton acceptor) is an active-site residue. Residues isoleucine 150, glycine 185, and 206 to 207 (AS) contribute to the substrate site.

Belongs to the triosephosphate isomerase family. Homotetramer; dimer of dimers.

It is found in the cytoplasm. It carries out the reaction D-glyceraldehyde 3-phosphate = dihydroxyacetone phosphate. Its pathway is carbohydrate biosynthesis; gluconeogenesis. It functions in the pathway carbohydrate degradation; glycolysis; D-glyceraldehyde 3-phosphate from glycerone phosphate: step 1/1. In terms of biological role, involved in the gluconeogenesis. Catalyzes stereospecifically the conversion of dihydroxyacetone phosphate (DHAP) to D-glyceraldehyde-3-phosphate (G3P). In Methanobacterium bryantii, this protein is Triosephosphate isomerase.